The sequence spans 277 residues: 2-dehydro-3-deoxyphosphooctonate aldolase (277 aa).

Belongs to the KdsA family.

Its subcellular location is the cytoplasm. It carries out the reaction D-arabinose 5-phosphate + phosphoenolpyruvate + H2O = 3-deoxy-alpha-D-manno-2-octulosonate-8-phosphate + phosphate. It participates in carbohydrate biosynthesis; 3-deoxy-D-manno-octulosonate biosynthesis; 3-deoxy-D-manno-octulosonate from D-ribulose 5-phosphate: step 2/3. Its pathway is bacterial outer membrane biogenesis; lipopolysaccharide biosynthesis. The polypeptide is 2-dehydro-3-deoxyphosphooctonate aldolase (Vesicomyosocius okutanii subsp. Calyptogena okutanii (strain HA)).